The chain runs to 150 residues: Multiprotein-bridging factor 1 (150 aa).

Residues 36–71 are disordered; that stretch reads SSESKGAGQSKGPADHQRIAKLDRDDAPKPPEKVSA. A compositionally biased stretch (basic and acidic residues) spans 48–70; the sequence is PADHQRIAKLDRDDAPKPPEKVS. The region spanning 84–137 is the HTH cro/C1-type domain; it reads IKNAEGKSMTQKELATSVNAKPQDIADLESGRAVPDQALLGKLERKLNVKLRGA. A DNA-binding region (H-T-H motif) is located at residues 94–113; that stretch reads QKELATSVNAKPQDIADLES.

This sequence belongs to the MBF1 family.

Transcriptional coactivator that stimulates GCN4-dependent transcriptional activity by bridging the DNA-binding region of GCN4 and TBP (SPT15), thereby recruiting TBP to GCN4-bound promoters. Involved in induction of the ribosome quality control (RQC) pathway; a pathway that degrades nascent peptide chains during problematic translation. Required to prevent stalled ribosomes from frameshifting. The polypeptide is Multiprotein-bridging factor 1 (MBF1) (Cryptococcus neoformans var. neoformans serotype D (strain B-3501A) (Filobasidiella neoformans)).